Reading from the N-terminus, the 293-residue chain is MPASDPRRLRSPLNPSIHSPFVIRQLPFEMDFSATASLPIGFSSLFLLTEVYIRHVESSRRRDISLLSNCWYIAVNTGLWICCLVLSIVALVLRIEAVSLSSCQLAWMQAAVLKASDAQLWQPSADQLQVYHLRILLFLPGESSWPYGVLALVLTACLQCAAAGLCVWDAAPGLTPHLTRSALVPILHVGWGLHYTVFLLWILRICSLKGNDLRHIWKWRVWCLLVAPLFISALVGATPLTLWYPPKITFLFWCRKQQMRWRMLGERGAVQSLRSVSSTVRAQPTSHPYPAAL.

5 helical membrane-spanning segments follow: residues 33–53 (SATA…EVYI), 73–93 (IAVN…ALVL), 148–168 (GVLA…LCVW), 183–203 (LVPI…LWIL), and 221–241 (VWCL…TPLT).

It localises to the membrane. The protein operates within mycotoxin biosynthesis. In terms of biological role, part of the gene clusters that mediate the biosynthesis of AM-toxins, host-selective toxins (HSTs) causing Alternaria blotch on apple, a worldwide distributed disease. AM-toxins are cyclic depsipeptides containing the 3 residues 2-hydroxy-isovaleric acid (2-HIV), dehydroalanine, L-alanine which are common for all 3 AM-toxins I to III. The fourth precursor is L-alpha-amino-methoxyphenyl-valeric acid (L-Amv) for AM-toxin I, L-alpha-amino-phenyl-valeric acid (L-Apv) for AM-toxin II, and L-alpha-amino-hydroxyphenyl-valeric acid (L-Ahv) for AM-toxin III. AM-toxins have two target sites for affecting susceptible apple cells; they cause invagination of the plasma membrane and electrolyte loss and chloroplast disorganization. The non-ribosomal peptide synthetase AMT1 contains 4 catalytic modules and is responsible for activation of each residue in AM-toxin. The aldo-keto reductase AMT2 catalyzes the conversion of 2-keto-isovaleric acid (2-KIV) to 2-hydroxy-isovaleric acid (2-HIV), one of the precursor residues incorporated by AMT1 during AM-toxin biosynthesis, by reduction of its ketone to an alcohol. The cytochrome P450 monooxygenase AMT3 and the thioesterase AMT4 are also important for AM-toxin production, but their exact function within the AM-toxin biosynthesis are not known yet. Up to 21 proteins (including AMT1 to AMT4) are predicted to be involved in AM-toxin biosynthesis since their expression ishighly up-regulated in AM-toxin-producing cultures. The polypeptide is AM-toxin biosynthesis protein 14 (Alternaria alternata (Alternaria rot fungus)).